Reading from the N-terminus, the 523-residue chain is NEDD8-activating enzyme E1 regulatory subunit AXL (523 aa).

It belongs to the ubiquitin-activating E1 family. ULA1 subfamily. As to quaternary structure, heterodimer of ECR1 and AXL1. The complex binds to RUB1/NEDD8 and RCE1.

The protein localises to the nucleus. The protein operates within protein modification; protein neddylation. Its function is as follows. Regulatory subunit of the dimeric ECR1-AXL1 E1 enzyme. E1 activates RUB1/NEDD8 by first adenylating its C-terminal glycine residue with ATP, thereafter linking this residue to the side chain of the catalytic cysteine, yielding a RUB1-ECR1 thioester and free AMP. E1 finally transfers RUB1 to the catalytic cysteine of RCE1. May function redundantly with AXR1 in the RUB conjugating pathway. Seems not to be functionally equivalent to AXR1 in vivo. This is NEDD8-activating enzyme E1 regulatory subunit AXL from Arabidopsis thaliana (Mouse-ear cress).